The sequence spans 105 residues: Small ribosomal subunit protein eS24 (105 aa).

Residues 85 to 105 (SVIAKNEEPEEEPEEEAEDAE) are disordered. Residues 92–105 (EPEEEPEEEAEDAE) are compositionally biased toward acidic residues.

Belongs to the eukaryotic ribosomal protein eS24 family.

The polypeptide is Small ribosomal subunit protein eS24 (Methanosphaera stadtmanae (strain ATCC 43021 / DSM 3091 / JCM 11832 / MCB-3)).